The chain runs to 530 residues: Chaperonin GroEL, chloroplastic (530 aa).

ATP is bound by residues 29-32 (TLGP), 86-90 (DGTTT), G414, 480-482 (DAL), and D496.

It belongs to the chaperonin (HSP60) family. As to quaternary structure, forms a cylinder of 14 subunits composed of two heptameric rings stacked back-to-back. Interacts with the co-chaperonin GroES.

The protein localises to the plastid. Its subcellular location is the chloroplast. The enzyme catalyses ATP + H2O + a folded polypeptide = ADP + phosphate + an unfolded polypeptide.. Together with its co-chaperonin GroES, plays an essential role in assisting protein folding. The GroEL-GroES system forms a nano-cage that allows encapsulation of the non-native substrate proteins and provides a physical environment optimized to promote and accelerate protein folding. The chain is Chaperonin GroEL, chloroplastic from Cyanidium caldarium (Red alga).